Here is a 208-residue protein sequence, read N- to C-terminus: Imidazoleglycerol-phosphate dehydratase (208 aa).

This sequence belongs to the imidazoleglycerol-phosphate dehydratase family.

It localises to the cytoplasm. It catalyses the reaction D-erythro-1-(imidazol-4-yl)glycerol 3-phosphate = 3-(imidazol-4-yl)-2-oxopropyl phosphate + H2O. The protein operates within amino-acid biosynthesis; L-histidine biosynthesis; L-histidine from 5-phospho-alpha-D-ribose 1-diphosphate: step 6/9. The polypeptide is Imidazoleglycerol-phosphate dehydratase (Arthrobacter sp. (strain FB24)).